The sequence spans 143 residues: Putative pre-16S rRNA nuclease (143 aa).

This sequence belongs to the YqgF nuclease family.

It localises to the cytoplasm. Functionally, could be a nuclease involved in processing of the 5'-end of pre-16S rRNA. The protein is Putative pre-16S rRNA nuclease of Mycoplasma capricolum subsp. capricolum (strain California kid / ATCC 27343 / NCTC 10154).